We begin with the raw amino-acid sequence, 84 residues long: Defensin-like protein 116 (84 aa).

Positions 1–24 are cleaved as a signal peptide; sequence MAITKNMLVVLLLTIIFVTSSVHC. Disulfide bonds link Cys-40/Cys-80, Cys-46/Cys-71, Cys-55/Cys-78, and Cys-59/Cys-79.

The protein belongs to the DEFL family.

The protein localises to the secreted. The protein is Defensin-like protein 116 of Arabidopsis thaliana (Mouse-ear cress).